The sequence spans 439 residues: tRNA-2-methylthio-N(6)-dimethylallyladenosine synthase (439 aa).

The region spanning 2–119 (KYIYIKTWGC…LPKMIDEVEK (118 aa)) is the MTTase N-terminal domain. [4Fe-4S] cluster-binding residues include Cys11, Cys48, Cys82, Cys156, Cys160, and Cys163. The 233-residue stretch at 142-374 (KKKGYTADIS…QERINIQTML (233 aa)) folds into the Radical SAM core domain. A TRAM domain is found at 377-439 (RKMFGSIQSV…HTHSLKGELF (63 aa)).

The protein belongs to the methylthiotransferase family. MiaB subfamily. Monomer. Requires [4Fe-4S] cluster as cofactor.

The protein localises to the cytoplasm. It catalyses the reaction N(6)-dimethylallyladenosine(37) in tRNA + (sulfur carrier)-SH + AH2 + 2 S-adenosyl-L-methionine = 2-methylsulfanyl-N(6)-dimethylallyladenosine(37) in tRNA + (sulfur carrier)-H + 5'-deoxyadenosine + L-methionine + A + S-adenosyl-L-homocysteine + 2 H(+). Catalyzes the methylthiolation of N6-(dimethylallyl)adenosine (i(6)A), leading to the formation of 2-methylthio-N6-(dimethylallyl)adenosine (ms(2)i(6)A) at position 37 in tRNAs that read codons beginning with uridine. The chain is tRNA-2-methylthio-N(6)-dimethylallyladenosine synthase from Buchnera aphidicola subsp. Acyrthosiphon pisum (strain APS) (Acyrthosiphon pisum symbiotic bacterium).